A 217-amino-acid polypeptide reads, in one-letter code: Ribonuclease HII (217 aa).

In terms of domain architecture, RNase H type-2 spans 26 to 215; sequence EIVCGVDEAG…VREALDLMAG (190 aa). The a divalent metal cation site is built by aspartate 32, glutamate 33, and aspartate 124.

It belongs to the RNase HII family. Requires Mn(2+) as cofactor. Mg(2+) is required as a cofactor.

The protein localises to the cytoplasm. It catalyses the reaction Endonucleolytic cleavage to 5'-phosphomonoester.. In terms of biological role, endonuclease that specifically degrades the RNA of RNA-DNA hybrids. The polypeptide is Ribonuclease HII (Burkholderia ambifaria (strain ATCC BAA-244 / DSM 16087 / CCUG 44356 / LMG 19182 / AMMD) (Burkholderia cepacia (strain AMMD))).